The sequence spans 223 residues: Adenylate kinase (223 aa).

Residue 10–15 coordinates ATP; that stretch reads GAGKGT. An NMP region spans residues 30 to 59; that stretch reads STGDILRQAVKEGTEVGKIAGELMKAGKLI. Residues T31, R36, 57–59, 85–88, and Q92 contribute to the AMP site; these read KLI and GFPR. The tract at residues 126–163 is LID; the sequence is GRYVCAQCGAGYHDEFKRPHKEGVCDICGSTEFKRRPD. Position 127 (R127) interacts with ATP. Zn(2+) contacts are provided by C130, C133, C150, and C153. AMP-binding residues include R160 and R172. Residue L200 coordinates ATP.

The protein belongs to the adenylate kinase family. In terms of assembly, monomer.

The protein resides in the cytoplasm. The catalysed reaction is AMP + ATP = 2 ADP. The protein operates within purine metabolism; AMP biosynthesis via salvage pathway; AMP from ADP: step 1/1. Functionally, catalyzes the reversible transfer of the terminal phosphate group between ATP and AMP. Plays an important role in cellular energy homeostasis and in adenine nucleotide metabolism. The chain is Adenylate kinase from Zymomonas mobilis subsp. mobilis (strain ATCC 31821 / ZM4 / CP4).